A 126-amino-acid polypeptide reads, in one-letter code: Glycine cleavage system H protein (126 aa).

The 83-residue stretch at 21 to 103 (TVTIGISEHA…YEGGWIVKVK (83 aa)) folds into the Lipoyl-binding domain. Lys62 carries the N6-lipoyllysine modification.

Belongs to the GcvH family. As to quaternary structure, the glycine cleavage system is composed of four proteins: P, T, L and H. (R)-lipoate serves as cofactor.

The glycine cleavage system catalyzes the degradation of glycine. The H protein shuttles the methylamine group of glycine from the P protein to the T protein. The protein is Glycine cleavage system H protein of Vibrio parahaemolyticus serotype O3:K6 (strain RIMD 2210633).